Reading from the N-terminus, the 217-residue chain is MIQLPDEINLIIVLSLLTLLPLISVMATSFVKFAVVFSLLRNALGVQQIPPNMAMYGLAIILSLYVMAPVGFATQDYLQANEVSLTNIESVEKFFDEGLAPYRMFLKQHIQAQEYSFFVDSTKQLWPKQYADRLESDSLFILLPAFTVSELTRAFEIGFLIYLPFIVIDLVISNILLAMGMMMVSPMTISLPFKLLLFVLLDGWTRLTHGLVISYGG.

The next 4 helical transmembrane spans lie at 11-31, 53-73, 157-177, and 181-201; these read IIVLSLLTLLPLISVMATSFV, MAMYGLAIILSLYVMAPVGFA, IGFLIYLPFIVIDLVISNILL, and MMMVSPMTISLPFKLLLFVLL.

It belongs to the FliP/MopC/SpaP family.

The protein localises to the cell membrane. In terms of biological role, component of the yop secretion machinery. May have a role in the negative pathway regulation of yop expression controlled by calcium. The sequence is that of Yop proteins translocation protein R (yscR) from Yersinia pestis.